We begin with the raw amino-acid sequence, 158 residues long: C-type lectin BML-2 (158 aa).

The N-terminal stretch at 1–23 (MGHFTFTGLCLLAMFLSLRGAEC) is a signal peptide. 4 disulfide bridges follow: Cys26-Cys37, Cys54-Cys154, Cys61-Cys156, and Cys129-Cys146. Positions 33 to 155 (KNGLCYKVFS…CESLHPFLCQ (123 aa)) constitute a C-type lectin domain. The Mannose-binding motif lies at 119–121 (EPN). The N-linked (GlcNAc...) asparagine glycan is linked to Asn121. The Ca(2+) site is built by Glu127, Asn142, and Asp143.

The protein belongs to the true venom lectin family. As to quaternary structure, dimer. Probably non-covalently linked. As to expression, expressed by the venom gland.

It localises to the secreted. Recombinant C-type lectin BML-2 is able to agglutinate erythrocytes. May be a calcium-dependent lectin. This chain is C-type lectin BML-2, found in Bungarus multicinctus (Many-banded krait).